We begin with the raw amino-acid sequence, 1065 residues long: Tubulin glycylase 3C (1065 aa).

6 disordered regions span residues 1-146, 158-182, 301-326, 341-360, 381-482, and 708-755; these read MSSL…REDK, IREQKEVNLESQTEQSDHSNVTKSK, STQKQLVRASSAEGDKEKDDKKDIAK, EKKRQEIAKEEEEKKKKEQL, FFVD…GNGS, and NKQK…EKQM. Residues 23–53 show a composition bias toward low complexity; that stretch reads QEGNQEDLNNQNDHNLNNNELDSLSSPPSDN. A compositionally biased stretch (acidic residues) spans 54–63; it reads YNEEEFEQED. Positions 73–92 are enriched in polar residues; that stretch reads QNASQNNISQTQRISQTQLP. Positions 122 to 146 are enriched in basic and acidic residues; sequence LMEKKKKEQEEKEKKELKLKKREDK. Residues 166–179 show a composition bias toward polar residues; sequence LESQTEQSDHSNVT. Positions 313 to 326 are enriched in basic and acidic residues; sequence EGDKEKDDKKDIAK. A compositionally biased stretch (basic and acidic residues) spans 385 to 403; it reads VPEKKPKKEKKKNESKEDN. The segment covering 404 to 423 has biased composition (polar residues); sequence IQITSPKLNSTKSLSSQITR. Residues 424-450 show a composition bias toward basic and acidic residues; that stretch reads KTNDAKKVEKLPKIKDSNKENHSKERN. Positions 451 to 479 are enriched in acidic residues; that stretch reads EDNEEGDDGEYECDEGDEGASDGEDEDDG. Residues 633-1009 enclose the TTL domain; it reads YFEKDPDIEK…DYGMEKSKKA (377 aa). Basic residues predominate over residues 709 to 721; the sequence is KQKPKKKKKKSKK. The span at 722-733 shows a compositional bias: basic and acidic residues; sequence DKQQGDTEKKEE. Over residues 734 to 754 the composition is skewed to acidic residues; it reads EEGEAEDEEEDEEDEEEEEKQ. ATP contacts are provided by residues 821–824, Lys-834, and Asp-836; that span reads QKYI.

Its subcellular location is the cell projection. It localises to the cilium. It is found in the cytoplasm. The protein resides in the cytoskeleton. The protein localises to the cilium axoneme. Its function is as follows. Probable glycylase which modifies tubulin, generating side chains of glycine on the gamma-carboxyl groups of specific glutamate residues within the C-terminal tail of tubulin. The protein is Tubulin glycylase 3C (TTLL3C) of Tetrahymena thermophila (strain SB210).